Here is a 559-residue protein sequence, read N- to C-terminus: uncharacterized protein (559 aa).

Basic and acidic residues predominate over residues 1 to 10; that stretch reads MSGRRGDHPG. The segment at 1–76 is disordered; sequence MSGRRGDHPG…ERSRVPPRTT (76 aa). 11 helical membrane passes run 128–148, 155–175, 186–206, 208–228, 259–279, 283–303, 358–378, 387–407, 428–448, 490–510, and 515–535; these read FAVD…AAAS, VALY…LIGP, VALA…IMNY, GATG…MMVF, VFGL…VEFV, LFQL…GASL, LWGN…PAFV, WVQL…NFAG, VLVT…ATAI, LAWV…WVGF, and ALLI…SLIP.

It to M.leprae ML2143.

It is found in the cell membrane. This is an uncharacterized protein from Mycobacterium tuberculosis (strain CDC 1551 / Oshkosh).